A 372-amino-acid chain; its full sequence is NAD(P)H-quinone oxidoreductase subunit 1 (372 aa).

8 consecutive transmembrane segments (helical) span residues 27-47 (IIWL…GVLV), 97-117 (ILFT…WLIV), 128-148 (VGIG…GLLM), 176-196 (LALS…IDIV), 204-224 (ILSW…ICAL), 266-286 (ILSA…PIPV), 308-328 (SIGI…AILL), and 347-367 (FLLP…LAFP).

It belongs to the complex I subunit 1 family. NDH-1 is composed of at least 11 different subunits.

It localises to the cellular thylakoid membrane. The enzyme catalyses a plastoquinone + NADH + (n+1) H(+)(in) = a plastoquinol + NAD(+) + n H(+)(out). It catalyses the reaction a plastoquinone + NADPH + (n+1) H(+)(in) = a plastoquinol + NADP(+) + n H(+)(out). Functionally, NDH-1 shuttles electrons from an unknown electron donor, via FMN and iron-sulfur (Fe-S) centers, to quinones in the respiratory and/or the photosynthetic chain. The immediate electron acceptor for the enzyme in this species is believed to be plastoquinone. Couples the redox reaction to proton translocation, and thus conserves the redox energy in a proton gradient. The protein is NAD(P)H-quinone oxidoreductase subunit 1 of Prochlorococcus marinus (strain MIT 9312).